Consider the following 259-residue polypeptide: Bacillaene synthase dehydratase PksH (259 aa).

Residues aspartate 68 and glutamate 137 contribute to the active site.

It belongs to the enoyl-CoA hydratase/isomerase family.

Its subcellular location is the cytoplasm. Its pathway is antibiotic biosynthesis; bacillaene biosynthesis. Functionally, involved in some intermediate steps for the synthesis of the antibiotic polyketide bacillaene which is involved in secondary metabolism. Catalyzes the dehydration of the (S)-3-hydroxy-3-methylglutaryl group tethered to PksL to a 3-methylglutaconyl moiety. This Bacillus subtilis (strain 168) protein is Bacillaene synthase dehydratase PksH (pksH).